Here is a 126-residue protein sequence, read N- to C-terminus: Ribosome-binding factor A (126 aa).

This sequence belongs to the RbfA family. As to quaternary structure, monomer. Binds 30S ribosomal subunits, but not 50S ribosomal subunits or 70S ribosomes.

The protein localises to the cytoplasm. Its function is as follows. One of several proteins that assist in the late maturation steps of the functional core of the 30S ribosomal subunit. Associates with free 30S ribosomal subunits (but not with 30S subunits that are part of 70S ribosomes or polysomes). Required for efficient processing of 16S rRNA. May interact with the 5'-terminal helix region of 16S rRNA. This chain is Ribosome-binding factor A, found in Nitrosospira multiformis (strain ATCC 25196 / NCIMB 11849 / C 71).